A 102-amino-acid chain; its full sequence is Small ribosomal subunit protein uS10 (102 aa).

Belongs to the universal ribosomal protein uS10 family. In terms of assembly, part of the 30S ribosomal subunit.

Functionally, involved in the binding of tRNA to the ribosomes. This chain is Small ribosomal subunit protein uS10, found in Roseiflexus castenholzii (strain DSM 13941 / HLO8).